Consider the following 317-residue polypeptide: Cytochrome f (317 aa).

An N-terminal signal peptide occupies residues 1–34; the sequence is MKGLKNQIMKKTSLFICTLLFILSIVFYPKITFA. Residues Y35, C55, C58, and H59 each contribute to the heme site. Residues 284-304 form a helical membrane-spanning segment; it reads VIGLIAFFIGVGLTQILLVLK.

It belongs to the cytochrome f family. The 4 large subunits of the cytochrome b6-f complex are cytochrome b6, subunit IV (17 kDa polypeptide, PetD), cytochrome f and the Rieske protein, while the 4 small subunits are PetG, PetL, PetM and PetN. The complex functions as a dimer. Heme is required as a cofactor.

The protein resides in the cellular thylakoid membrane. Component of the cytochrome b6-f complex, which mediates electron transfer between photosystem II (PSII) and photosystem I (PSI), cyclic electron flow around PSI, and state transitions. In Prochlorococcus marinus (strain MIT 9215), this protein is Cytochrome f.